The following is a 577-amino-acid chain: Outer spore wall assembly protein SHE10 (577 aa).

The N-terminal stretch at 1–23 (MGKLIKLITTLTVLVSLLQYCCE) is a signal peptide. Coiled coils occupy residues 379–416 (NETRSTLDELTNAMEKDLSEITDEIEKKVNAIREENVE) and 513–561 (ILRS…EEDV). Over residues 525-545 (RERKERERKEREKAAAEEFQR) the composition is skewed to basic and acidic residues. Residues 525–577 (RERKERERKEREKAAAEEFQRQQELLLQQEEEDEEDVSYTSTSTITTTTTMTL) form a disordered region. The segment covering 562-577 (SYTSTSTITTTTTMTL) has biased composition (low complexity).

This sequence belongs to the SHE10 family. Component of the mitochondria-localized RNase mitochondrial RNA-processing (RNase MRP) composed of one single RNA encoded by the NME1 gene and at least 31 proteins. Absent in the nucleus-localized RNase MRP (NuMRP).

The protein resides in the mitochondrion. In terms of biological role, involved in spore wall assembly. May be a component of the mitochondrial RNase MRP (MtMRP), a ribonucleoprotein endoribonuclease involved in the cleaving RNA transcripts to generate primers for DNA replication in mitochondria. This chain is Outer spore wall assembly protein SHE10, found in Saccharomyces cerevisiae (strain JAY291) (Baker's yeast).